The following is a 569-amino-acid chain: Membrane protein insertase YidC (569 aa).

A run of 8 helical transmembrane segments spans residues 7 to 24 (VLWV…DNYN), 219 to 239 (GSAL…PAIY), 299 to 319 (LYAV…TASM), 340 to 360 (FELV…FWLM), 366 to 386 (ILGN…LAFF), 436 to 456 (IGGC…YWVL), 485 to 505 (IGTF…SMFI), and 526 to 546 (PIAF…YWVV).

It belongs to the OXA1/ALB3/YidC family. Type 1 subfamily. As to quaternary structure, interacts with the Sec translocase complex via SecD. Specifically interacts with transmembrane segments of nascent integral membrane proteins during membrane integration.

The protein resides in the cell inner membrane. Required for the insertion and/or proper folding and/or complex formation of integral membrane proteins into the membrane. Involved in integration of membrane proteins that insert both dependently and independently of the Sec translocase complex, as well as at least some lipoproteins. Aids folding of multispanning membrane proteins. The sequence is that of Membrane protein insertase YidC from Herminiimonas arsenicoxydans.